The following is a 165-amino-acid chain: Chorismate pyruvate-lyase (165 aa).

Substrate-binding residues include Met35, Arg77, Leu115, and Glu156.

It belongs to the UbiC family. As to quaternary structure, monomer.

Its subcellular location is the cytoplasm. It catalyses the reaction chorismate = 4-hydroxybenzoate + pyruvate. The protein operates within cofactor biosynthesis; ubiquinone biosynthesis. In terms of biological role, removes the pyruvyl group from chorismate, with concomitant aromatization of the ring, to provide 4-hydroxybenzoate (4HB) for the ubiquinone pathway. This is Chorismate pyruvate-lyase from Shigella sonnei (strain Ss046).